An 83-amino-acid polypeptide reads, in one-letter code: Bowman-Birk type seed trypsin and chymotrypsin inhibitor (83 aa).

Disulfide bonds link cysteine 18-cysteine 72, cysteine 19-cysteine 34, cysteine 22-cysteine 68, cysteine 24-cysteine 32, cysteine 42-cysteine 49, cysteine 46-cysteine 61, and cysteine 51-cysteine 59.

It belongs to the Bowman-Birk serine protease inhibitor family.

This Vigna unguiculata (Cowpea) protein is Bowman-Birk type seed trypsin and chymotrypsin inhibitor.